We begin with the raw amino-acid sequence, 73 residues long: Omega-hexatoxin-Ar1b (73 aa).

The first 22 residues, 1 to 22, serve as a signal peptide directing secretion; sequence MNTATGFIVLLVLATVLGCIEA. The propeptide occupies 23 to 37; sequence GESHVREDAMGRARR. 3 cysteine pairs are disulfide-bonded: Cys40-Cys54, Cys47-Cys58, and Cys53-Cys72.

Belongs to the neurotoxin 08 (Shiva) family. 01 (omega toxin) subfamily. Expressed by the venom gland.

It localises to the secreted. In terms of biological role, insecticidal toxin that reversibly and voltage-independently blocks both mid-low- (M-LVA) and high-voltage-activated (HVA) calcium channels (Cav) in cockroach DUM neurons. Also causes a modest block of insect sodium channel currents (Nav). Induces potent excitatory symptoms, followed by flaccid paralysis leading to death in house crickets. The polypeptide is Omega-hexatoxin-Ar1b (Atrax robustus (Sydney funnel-web spider)).